The sequence spans 91 residues: DNA-directed RNA polymerase subunit omega (91 aa).

It belongs to the RNA polymerase subunit omega family. As to quaternary structure, the RNAP catalytic core consists of 2 alpha, 1 beta, 1 beta' and 1 omega subunit. When a sigma factor is associated with the core the holoenzyme is formed, which can initiate transcription. The rRNA transcription and antitermination complex (rrnTAC) consists of RNAP, NusA, NusB, NusE (rpsJ), NusG, SubB, ribosomal protein S4, DNA and precursor rRNA; S4 is more flexible than other subunits.

The catalysed reaction is RNA(n) + a ribonucleoside 5'-triphosphate = RNA(n+1) + diphosphate. Its function is as follows. Promotes RNA polymerase (RNAP) assembly. Latches the N- and C-terminal regions of the beta' subunit thereby facilitating its interaction with the beta and alpha subunits. In terms of biological role, part of the processive rRNA transcription and antitermination complex (rrnTAC). The complex forms an RNA-chaperone ring around the RNA exit tunnel of RNAP. It supports rapid transcription and antitermination of rRNA operons, cotranscriptional rRNA folding, and annealing of distal rRNA regions to allow correct ribosome biogenesis. The polypeptide is DNA-directed RNA polymerase subunit omega (rpoZ) (Escherichia coli (strain K12)).